The chain runs to 239 residues: Phosphoribosylaminoimidazole-succinocarboxamide synthase (239 aa).

The protein belongs to the SAICAR synthetase family.

The enzyme catalyses 5-amino-1-(5-phospho-D-ribosyl)imidazole-4-carboxylate + L-aspartate + ATP = (2S)-2-[5-amino-1-(5-phospho-beta-D-ribosyl)imidazole-4-carboxamido]succinate + ADP + phosphate + 2 H(+). It functions in the pathway purine metabolism; IMP biosynthesis via de novo pathway; 5-amino-1-(5-phospho-D-ribosyl)imidazole-4-carboxamide from 5-amino-1-(5-phospho-D-ribosyl)imidazole-4-carboxylate: step 1/2. This Acinetobacter baylyi (strain ATCC 33305 / BD413 / ADP1) protein is Phosphoribosylaminoimidazole-succinocarboxamide synthase.